The sequence spans 118 residues: MSRVKRGVTARARHKKVLNQAKGYYGARSRVYRVAKQAVIKAGQYAYRDRKVKKRTFRSLWIVRINAAARQHDISYSQLINGLNKADVELDRKALAELAVYNKDAFAAVVEKAKAALA.

It belongs to the bacterial ribosomal protein bL20 family.

Functionally, binds directly to 23S ribosomal RNA and is necessary for the in vitro assembly process of the 50S ribosomal subunit. It is not involved in the protein synthesizing functions of that subunit. This chain is Large ribosomal subunit protein bL20, found in Francisella tularensis subsp. holarctica (strain FTNF002-00 / FTA).